A 514-amino-acid polypeptide reads, in one-letter code: Sugar transport protein 4 (514 aa).

Residues 1 to 22 (MAGGFVSQTPGVRNYNYKLTPK) lie on the Cytoplasmic side of the membrane. Transmembrane regions (helical) follow at residues 23-43 (VFVT…DLGI), 80-100 (LLTL…LFAS), 117-137 (FTFF…MLLI), 140-160 (ILLG…LSEM), 172-192 (GFQV…YFTA), 202-222 (ISLG…LILP), 283-303 (LIMT…VITF), 321-341 (LSAM…VFTV), 348-368 (ILFL…GAMI), 387-407 (LIVA…GPLG), 426-446 (INVS…LTML), and 451-471 (FGLF…IYLM). At 472 to 514 (LPETKNVPIEEMNRVWKAHWFWGKFIPDEAVNMGAAEMQQKSV) the chain is on the cytoplasmic side.

The protein belongs to the major facilitator superfamily. Sugar transporter (TC 2.A.1.1) family. As to expression, mostly in flowers and roots, especially in anthers, including pollen, and root tips. Also present in some hydathodes.

It localises to the cell membrane. In terms of biological role, mediates an active uptake of hexoses, probably by sugar/hydrogen symport. Can transport glucose, methylglucose, galactose, xylose and mannose, but not fructose. The chain is Sugar transport protein 4 (STP4) from Arabidopsis thaliana (Mouse-ear cress).